The following is a 186-amino-acid chain: Dynactin subunit 3 (186 aa).

At A2 the chain carries N-acetylalanine. A coiled-coil region spans residues 46-66 (NIASKRERVKILYKKIEDLIK).

Belongs to the dynactin subunit 3 family. As to quaternary structure, subunit of dynactin, a multiprotein complex part of a tripartite complex with dynein and a adapter, such as BICDL1, BICD2 or HOOK3. The dynactin complex is built around ACTR1A/ACTB filament and consists of an actin-related filament composed of a shoulder domain, a pointed end and a barbed end. Its length is defined by its flexible shoulder domain. The soulder is composed of 2 DCTN1 subunits, 4 DCTN2 and 2 DCTN3. The 4 DCNT2 (via N-terminus) bind the ACTR1A filament and act as molecular rulers to determine the length. The pointed end is important for binding dynein-dynactin cargo adapters. Consists of 4 subunits: ACTR10, DCNT4, DCTN5 and DCTN6. The barbed end is composed of a CAPZA1:CAPZB heterodimers, which binds ACTR1A/ACTB filament and dynactin and stabilizes dynactin.

It is found in the cytoplasm. The protein resides in the cytoskeleton. Its subcellular location is the microtubule organizing center. It localises to the centrosome. The protein localises to the chromosome. It is found in the centromere. The protein resides in the kinetochore. Its subcellular location is the spindle. It localises to the cleavage furrow. The protein localises to the midbody. Part of the dynactin complex that activates the molecular motor dynein for ultra-processive transport along microtubules. Together with dynein may be involved in spindle assembly and cytokinesis. This Mus musculus (Mouse) protein is Dynactin subunit 3.